The sequence spans 254 residues: MLKILVSNDDGVMAKGIQTLAKALRQRYDVQIVAPDRNRSAASNSLTIDRPLRKQRHENGDIAIVEGTPTDCVYLGVNHLVRPRPDIVVSGINHGPNLGDDVLYSGTVAAATEGRFLGLPAIAVSLDGETHFDTAAQVTCDVLAMLQRVPLRAGNILNINVPDIPLAEIKGFRITRCGSRHASQHVYTQTDPKGNTLYWIGPPGEKNDVGPDTDFAAVDAGYVSITPLHVDSTAYKALELLKDWLNKAEVEKTC.

Residues D9, D10, S40, and N93 each contribute to the a divalent metal cation site.

It belongs to the SurE nucleotidase family. The cofactor is a divalent metal cation.

It is found in the cytoplasm. It carries out the reaction a ribonucleoside 5'-phosphate + H2O = a ribonucleoside + phosphate. It catalyses the reaction a ribonucleoside 3'-phosphate + H2O = a ribonucleoside + phosphate. The catalysed reaction is [phosphate](n) + H2O = [phosphate](n-1) + phosphate + H(+). Functionally, nucleotidase with a broad substrate specificity as it can dephosphorylate various ribo- and deoxyribonucleoside 5'-monophosphates and ribonucleoside 3'-monophosphates with highest affinity to 3'-AMP. Also hydrolyzes polyphosphate (exopolyphosphatase activity) with the preference for short-chain-length substrates (P20-25). Might be involved in the regulation of dNTP and NTP pools, and in the turnover of 3'-mononucleotides produced by numerous intracellular RNases (T1, T2, and F) during the degradation of various RNAs. This is 5'/3'-nucleotidase SurE from Proteus mirabilis (strain HI4320).